Consider the following 130-residue polypeptide: Small ribosomal subunit protein eS8 (130 aa).

The protein belongs to the eukaryotic ribosomal protein eS8 family. As to quaternary structure, part of the 30S ribosomal subunit.

The chain is Small ribosomal subunit protein eS8 from Thermococcus onnurineus (strain NA1).